A 495-amino-acid polypeptide reads, in one-letter code: uncharacterized protein (495 aa).

It localises to the cytoplasm. It is found in the nucleus. This is an uncharacterized protein from Saccharomyces cerevisiae (strain ATCC 204508 / S288c) (Baker's yeast).